We begin with the raw amino-acid sequence, 545 residues long: MLTQLKTYPKLLKHYEEIKEAHMRDWFSKDKERASRYFVQFESLSLDYSKNRLNDTTLKLLFELANDCSLKEKIEAMFKGEKINTTEKRAVLHTALRSLNDTEILLDNMEVLKSVRSVLKRMRAFSDSVRSGKRLGYTNQVITDIVNIGIGGSDLGALMVCTALKRYGHPRLKMHFVSNVDGTQILDVLEKLNPASTLFIVASKTFSTQETLTNALTARKWFVERSGDEKHIAKHFVAVSTNKEAVQQFGIDEHNMFEFWDFVGGRYSLWSAIGLSIMIYLGKKNFNALLKGAYLMDEHFRNAPFESNLPVLMGLIGVWYINFFQSKSHLIAPYDQYLRHFPKFIQQLDMESNGKRISKKGETIPYDTCPVVWGDMGINAQHAFFQLLHQGTHLIPIDFIASLDKKPNAKGHHEILFSNVLAQAQAFMKGKSYEEALGELLFKGLDKDEAKDLAHHRVFFGNRPSNILLLEKISPSNIGALVALYEHKVFVQGVIWDINSFDQWGVELGKELAVPILQELEGHKSNAYFDSSTKHLIELYKNYNQ.

Glu-351 serves as the catalytic Proton donor. Active-site residues include His-382 and Lys-510.

This sequence belongs to the GPI family.

It localises to the cytoplasm. The catalysed reaction is alpha-D-glucose 6-phosphate = beta-D-fructose 6-phosphate. Its pathway is carbohydrate biosynthesis; gluconeogenesis. It functions in the pathway carbohydrate degradation; glycolysis; D-glyceraldehyde 3-phosphate and glycerone phosphate from D-glucose: step 2/4. Functionally, catalyzes the reversible isomerization of glucose-6-phosphate to fructose-6-phosphate. In Helicobacter pylori (strain HPAG1), this protein is Glucose-6-phosphate isomerase.